The chain runs to 259 residues: Leucine-rich repeat-containing protein 3B (259 aa).

Residues 1 to 33 (MNLVDLWLTRSLSMCLLLQSFVLMILCFHSASM) form the signal peptide. The 31-residue stretch at 34 to 64 (CPKGCLCSSSGGLNVTCSNANLKEIPRDLPP) folds into the LRRNT domain. An N-linked (GlcNAc...) asparagine glycan is attached at N47. 3 LRR repeats span residues 65–86 (ETVL…IFKD), 89–110 (QLRV…AFKG), and 114–135 (TLQT…AFNN). An N-linked (GlcNAc...) asparagine glycan is attached at N94. Residues 145 to 197 (NPWHCDCTLQQVLRSMVSNHETAHNVICKTSVLDEHAGRPFLNAANDADLCNL) form the LRRCT domain. Residues 205–225 (AMLVTMFGWFTMVISYVVYYV) traverse the membrane as a helical segment.

The protein belongs to the LRRC3 family.

Its subcellular location is the membrane. This is Leucine-rich repeat-containing protein 3B (LRRC3B) from Bos taurus (Bovine).